The sequence spans 313 residues: Putative S-adenosyl-L-methionine-dependent methyltransferase MAV_5150 (313 aa).

S-adenosyl-L-methionine is bound by residues D139 and 168–169 (DL).

The protein belongs to the UPF0677 family.

Functionally, exhibits S-adenosyl-L-methionine-dependent methyltransferase activity. This chain is Putative S-adenosyl-L-methionine-dependent methyltransferase MAV_5150, found in Mycobacterium avium (strain 104).